A 470-amino-acid polypeptide reads, in one-letter code: ATP synthase subunit beta (470 aa).

Position 155–162 (155–162 (GGAGVGKT)) interacts with ATP.

It belongs to the ATPase alpha/beta chains family. In terms of assembly, F-type ATPases have 2 components, CF(1) - the catalytic core - and CF(0) - the membrane proton channel. CF(1) has five subunits: alpha(3), beta(3), gamma(1), delta(1), epsilon(1). CF(0) has three main subunits: a(1), b(2) and c(9-12). The alpha and beta chains form an alternating ring which encloses part of the gamma chain. CF(1) is attached to CF(0) by a central stalk formed by the gamma and epsilon chains, while a peripheral stalk is formed by the delta and b chains.

The protein localises to the cell membrane. The catalysed reaction is ATP + H2O + 4 H(+)(in) = ADP + phosphate + 5 H(+)(out). Functionally, produces ATP from ADP in the presence of a proton gradient across the membrane. The catalytic sites are hosted primarily by the beta subunits. The chain is ATP synthase subunit beta from Staphylococcus aureus (strain MW2).